Here is a 241-residue protein sequence, read N- to C-terminus: tRNA (guanine-N(7)-)-methyltransferase (241 aa).

Residues E71, E96, D123, and D146 each coordinate S-adenosyl-L-methionine. Residue D146 is part of the active site. Substrate contacts are provided by residues K150, D182, and T219–E222.

It belongs to the class I-like SAM-binding methyltransferase superfamily. TrmB family.

The catalysed reaction is guanosine(46) in tRNA + S-adenosyl-L-methionine = N(7)-methylguanosine(46) in tRNA + S-adenosyl-L-homocysteine. It participates in tRNA modification; N(7)-methylguanine-tRNA biosynthesis. Catalyzes the formation of N(7)-methylguanine at position 46 (m7G46) in tRNA. In Pseudoalteromonas translucida (strain TAC 125), this protein is tRNA (guanine-N(7)-)-methyltransferase.